The chain runs to 350 residues: tRNA uridine(34) hydroxylase (350 aa).

Residues 146–240 (DDPDAVFIDM…YARRARAQGL (95 aa)) form the Rhodanese domain. Cys200 (cysteine persulfide intermediate) is an active-site residue. Over residues 319–328 (RRRRAGRENG) the composition is skewed to basic and acidic residues. A disordered region spans residues 319 to 350 (RRRRAGRENGNKIFNKSRGRLNSKLSIPDPAE).

Belongs to the TrhO family.

It catalyses the reaction uridine(34) in tRNA + AH2 + O2 = 5-hydroxyuridine(34) in tRNA + A + H2O. Catalyzes oxygen-dependent 5-hydroxyuridine (ho5U) modification at position 34 in tRNAs. The protein is tRNA uridine(34) hydroxylase of Salmonella newport (strain SL254).